The primary structure comprises 162 residues: Caveolin-2 (162 aa).

Residues 1-86 lie on the Cytoplasmic side of the membrane; that stretch reads MGLETEKADV…FEISKYVMYK (86 aa). Position 19 is a phosphotyrosine (Tyr19). Phosphoserine is present on residues Ser20 and Ser36. The segment at residues 87-107 is an intramembrane region (helical); sequence FLTVFLAIPLAFVAGILFATL. Residues 108-162 are Cytoplasmic-facing; the sequence is SCLHIWIIMPFVKTCLMVLPSVQTIWKSVTDVIIAPLCTSVGRSFSSISLQLSHD.

It belongs to the caveolin family. As to quaternary structure, homodimer. Caveolin-1 and -2 colocalize and form a stable hetero-oligomeric complex.

It is found in the golgi apparatus membrane. It localises to the cell membrane. The protein localises to the membrane. The protein resides in the caveola. In terms of biological role, may act as a scaffolding protein within caveolar membranes. Interacts directly with G-protein alpha subunits and can functionally regulate their activity. Caveolin-2 may function as an accessory protein in conjunction with caveolin-1. The polypeptide is Caveolin-2 (CAV2) (Microcebus murinus (Gray mouse lemur)).